Reading from the N-terminus, the 472-residue chain is WASH complex subunit 1 (472 aa).

The interval 1 to 51 is required for WASH complex assembly; that stretch reads MPQNRSVESQAYSLPLILPDLRREEAIHQITDTLQHLQTVSNDIFSRILQR. 2 disordered regions span residues 294–411 and 429–472; these read DRQD…GGDL and KVPA…DWES. The span at 301 to 334 shows a compositional bias: pro residues; it reads LPPPPPPPPPPPPPPPPEPSALSPPAPPPPPLSI. The tract at residues 352 to 472 is VCA; the sequence is QGAPKEVVNP…GDGDEDDWES (121 aa). The 23-residue stretch at 364–386 folds into the WH2 domain; it reads GRASLLESIRQAGGIGKANLRNV. Residues 385-400 are compositionally biased toward basic and acidic residues; sequence NVKEKKLEKKKMKEQE.

Belongs to the WASH1 family. Component of the WASH complex.

Its subcellular location is the early endosome membrane. It is found in the recycling endosome membrane. Functionally, acts as a nucleation-promoting factor at the surface of endosomes, where it recruits and activates the Arp2/3 complex to induce actin polymerization, playing a key role in the fission of tubules that serve as transport intermediates during endosome sorting. This is WASH complex subunit 1 from Xenopus laevis (African clawed frog).